The sequence spans 922 residues: Cell cycle and apoptosis regulator protein 2 (922 aa).

The segment at 1 to 39 (MSQFKRQRINPLPGGRNFSGAASTSLLGPPPGLLTPPVA) is disordered. Position 35 is a phosphothreonine (Thr-35). N6-acetyllysine; by KAT8 is present on Lys-112. Lys-123 bears the N6-methyllysine mark. A Phosphoserine modification is found at Ser-124. Disordered stretches follow at residues 178-219 (LNRF…KPRH), 280-307 (RIQVSSEKEAAPDTGAEPSPEDSDPTYS), 446-508 (KATE…EPAV), and 567-638 (VSPP…RGEA). Arg-180 bears the Omega-N-methylarginine mark. Positions 188 to 200 (GRLDQGRSDDYDS) are enriched in basic and acidic residues. An N6-acetyllysine; by KAT8 modification is found at Lys-215. The span at 473 to 491 (QADTSKQNTETMEATTQQD) shows a compositional bias: polar residues. Thr-483 is modified (phosphothreonine). Ser-568 carries the post-translational modification Phosphoserine. Positions 571-601 (EPEKEEAAKEDAVKEEEAVKEEAVKVSKDEV) are enriched in basic and acidic residues. Positions 573-596 (EKEEAAKEDAVKEEEAVKEEAVKV) form a coiled coil. Lys-590 is covalently cross-linked (Glycyl lysine isopeptide (Lys-Gly) (interchain with G-Cter in SUMO2 and SUMO3); alternate). Lys-590 is covalently cross-linked (Glycyl lysine isopeptide (Lys-Gly) (interchain with G-Cter in SUMO2); alternate). The interval 609-669 (ESDSPLKEDG…DEFAGAKLEE (61 aa)) is interaction with MCC. 5 positions are modified to phosphoserine: Ser-612, Ser-626, Ser-674, Ser-677, and Ser-680. Tyr-684 is subject to Phosphotyrosine. Residues Ser-686 and Ser-807 each carry the phosphoserine modification. The interaction with NR1D1 stretch occupies residues 703–922 (DCLLAFVFFD…VEKEEPTPSN (220 aa)). Residues 828–898 (LENKIHTLEL…QDFRRRLTPL (71 aa)) are a coiled coil. Thr-896 carries the phosphothreonine modification.

In terms of assembly, component of the DBIRD complex. Interacts with ZNF326/ZIRD; the interaction is direct. Interacts (via N-terminus) with SIRT1, which inhibits the deacetylation of substrates. Interacts (via N-terminus) with SUV39H1; this interaction abolishes the interaction with SIRT1. Component of a nuclear receptor-mediated transcription complex composed of at least ZNF335, CCAR2 and EMSY; the complex stimulates the transcription of nuclear receptor target genes such as SOX9 and HOXA1. Within the complex interacts with EMSY and interacts with ZNF335 (via C-terminus). Components of this complex may associate with components of a histone methylation complex to form a complex at least composed of ZNF335, HCFC1, CCAR2, EMSY, MKI67, RBBP5, ASH2L and WDR5. Within this complex, interacts with ASH2L. Interacts with NR1D1. Interacts (via N-terminus) with ESR1 and ESR2. Interacts (via N-terminus) with HDAC3 (via C-terminus). Interacts with HDAC1 and MED2F. Interacts with MCC. Interacts (via N-terminus) with NR1H2 and NR1H3 in a ligand-independent manner. Interacts with CSNK2A1. Interacts (via N-terminus) with p53/TP53. Interacts (via N-terminus) with BRCA1 (via the BRCT domains). Interacts (via N-terminus) with CHEK2 (via protein kinase domain). Interacts with PSEM3. Interacts (via N-terminus) with PSIA3 and SENP1. The sumoylated form shows a preferential interaction with SIRT1 as compared to its unmodified form. Interacts with CECR2; may form part of the CERF-1 and/or CEF-5 ISWI chromatin remodeling complexes in embryonic stem cells. In terms of processing, acetylation at Lys-112 and Lys-215 by KAT8 prevents inhibitory binding to SIRT1 and increases its deacetylase activity. Genotoxic stress induces its sumoylation and sumoylation promotes the SIRT1-CCAR2 interaction which in turn inhibits SIRT1-mediated deacetylation of p53/TP53. Sumoylation leads to transcriptional activation of p53/TP53 by sequestering SIRT1 from p53/TP53. Desumoylated by SENP1.

It is found in the nucleus. Its subcellular location is the cytoplasm. It localises to the cytoskeleton. The protein localises to the spindle. Its function is as follows. Core component of the DBIRD complex, a multiprotein complex that acts at the interface between core mRNP particles and RNA polymerase II (RNAPII) and integrates transcript elongation with the regulation of alternative splicing: the DBIRD complex affects local transcript elongation rates and alternative splicing of a large set of exons embedded in (A + T)-rich DNA regions. Inhibits SIRT1 deacetylase activity leading to increasing levels of p53/TP53 acetylation and p53-mediated apoptosis. Inhibits SUV39H1 methyltransferase activity. Mediates ligand-dependent transcriptional activation by nuclear hormone receptors. Plays a critical role in maintaining genomic stability and cellular integrity following UV-induced genotoxic stress. Regulates the circadian expression of the core clock components NR1D1 and BMAL1. Enhances the transcriptional repressor activity of NR1D1 through stabilization of NR1D1 protein levels by preventing its ubiquitination and subsequent degradation. Represses the ligand-dependent transcriptional activation function of ESR2. Acts as a regulator of PCK1 expression and gluconeogenesis by a mechanism that involves, at least in part, both NR1D1 and SIRT1. Negatively regulates the deacetylase activity of HDAC3 and can alter its subcellular localization. Positively regulates the beta-catenin pathway (canonical Wnt signaling pathway) and is required for MCC-mediated repression of the beta-catenin pathway. Represses ligand-dependent transcriptional activation function of NR1H2 and NR1H3 and inhibits the interaction of SIRT1 with NR1H3. Plays an important role in tumor suppression through p53/TP53 regulation; stabilizes p53/TP53 by affecting its interaction with ubiquitin ligase MDM2. Represses the transcriptional activator activity of BRCA1. Inhibits SIRT1 in a CHEK2 and PSEM3-dependent manner and inhibits the activity of CHEK2 in vitro. This Mus musculus (Mouse) protein is Cell cycle and apoptosis regulator protein 2 (Ccar2).